The sequence spans 802 residues: Mitogen-activated protein kinase kinase kinase 20 (802 aa).

An N-acetylserine modification is found at S2. Phosphoserine is present on residues S2, S3, and S7. A Protein kinase domain is found at 16-277 (LQFFENCGGG…NLPDQCNSFL (262 aa)). Residues 22-30 (CGGGSFGSV) and K45 contribute to the ATP site. Catalysis depends on D133, which acts as the Proton acceptor. Position 161 is a phosphothreonine; by autocatalysis (T161). S165 carries the post-translational modification Phosphoserine; by autocatalysis. 2 positions are modified to phosphoserine: S275 and S302. The leucine-zipper stretch occupies residues 287–308 (IEATLERLKKLERDLSFKEQEL). The region spanning 339–410 (WTEDDVYFWV…KSAIEKLTHD (72 aa)) is the SAM domain. K434, Q453, and S567 each carry phosphoserine. Residue T586 is modified to Phosphothreonine. Phosphoserine occurs at positions 587, 593, and 599. A compositionally biased stretch (polar residues) spans 624 to 642 (YQQITPSINPSRSSSPTQY). A disordered region spans residues 624–802 (YQQITPSINP…RGNYRGRRNF (179 aa)). Phosphothreonine is present on T628. Phosphoserine occurs at positions 634, 638, 649, 650, and 661. Positions 643–666 (GLSRNFSSLNLSSRDSGFSSLNDS) are enriched in low complexity. Over residues 667-678 (SSERGRYSDRSR) the composition is skewed to basic and acidic residues. Positions 670-713 (RGRYSDRSRNKYYRGSVSLNSSPKGRYGGKSQHSTPSRERYSGK) are sensing domain (S). S685, S720, S727, and S733 each carry phosphoserine. Residues 728–741 (PDFKRSPNDHDRRV) show a composition bias toward basic and acidic residues. Position 744 is a phosphothreonine (T744). Residues 776-802 (RKKTHRQLSAKTSKERTRGNYRGRRNF) form a C-terminal domain (CTD) region.

Belongs to the protein kinase superfamily. STE Ser/Thr protein kinase family. MAP kinase kinase kinase subfamily. As to quaternary structure, homodimer. Interacts with ZNF33A. Component of a signaling complex containing at least AKAP13, PKN1, MAPK14, MAP3K20 and MAP2K3. Within this complex, AKAP13 interacts directly with PKN1, which in turn recruits MAPK14, MAP2K3 and MAP3K20. Interacts with EIF2AK4/GCN2; promoting EIF2AK4/GCN2 kinase activity. Interacts with isoform ZAKbeta. In terms of assembly, interacts with isoform ZAKalpha. The cofactor is Mg(2+). In terms of processing, activated by phosphorylation by PKN1, followed by autophosphorylation on Thr-161 and Ser-165. Autophosphorylation in response to ribotoxic stress promotes dissociation from colliding ribosomes and activation.

It localises to the cytoplasm. The protein localises to the nucleus. The enzyme catalyses L-seryl-[protein] + ATP = O-phospho-L-seryl-[protein] + ADP + H(+). It catalyses the reaction L-threonyl-[protein] + ATP = O-phospho-L-threonyl-[protein] + ADP + H(+). Its activity is regulated as follows. Activated in response to stress, such as ribosomal stress, osmotic shock and ionizing radiation. Activated by phosphorylation by PKN1, followed by autophosphorylation on Thr-161 and Ser-165. Stress-activated component of a protein kinase signal transduction cascade that promotes programmed cell death in response to various stress, such as ribosomal stress, osmotic shock and ionizing radiation. Acts by catalyzing phosphorylation of MAP kinase kinases, leading to activation of the JNK (MAPK8/JNK1, MAPK9/JNK2 and/or MAPK10/JNK3) and MAP kinase p38 (MAPK11, MAPK12, MAPK13 and/or MAPK14) pathways. Activates JNK through phosphorylation of MAP2K4/MKK4 and MAP2K7/MKK7, and MAP kinase p38 gamma (MAPK12) via phosphorylation of MAP2K3/MKK3 and MAP2K6/MKK6. Involved in stress associated with adrenergic stimulation: contributes to cardiac decompensation during periods of acute cardiac stress. May be involved in regulation of S and G2 cell cycle checkpoint by mediating phosphorylation of CHEK2. In terms of biological role, key component of the stress-activated protein kinase signaling cascade in response to ribotoxic stress or UV-B irradiation. Acts as the proximal sensor of ribosome collisions during the ribotoxic stress response (RSR). Directly binds to the ribosome by inserting its flexible C-terminus into the ribosomal intersubunit space, thereby acting as a sentinel for colliding ribosomes. Upon ribosome collisions, activates either the stress-activated protein kinase signal transduction cascade or the integrated stress response (ISR), leading to programmed cell death or cell survival, respectively. Dangerous levels of ribosome collisions trigger the autophosphorylation and activation of MAP3K20, which dissociates from colliding ribosomes and phosphorylates MAP kinase kinases, leading to activation of the JNK and MAP kinase p38 pathways that promote programmed cell death. Less dangerous levels of ribosome collisions trigger the integrated stress response (ISR): MAP3K20 activates EIF2AK4/GCN2 independently of its protein-kinase activity, promoting EIF2AK4/GCN2-mediated phosphorylation of EIF2S1/eIF-2-alpha. Also acts as a histone kinase by phosphorylating histone H3 at 'Ser-28' (H3S28ph). Functionally, isoform that lacks the C-terminal region that mediates ribosome-binding: does not act as a sensor of ribosome collisions in response to ribotoxic stress. May act as an antagonist of isoform ZAKalpha: interacts with isoform ZAKalpha, leading to decrease the expression of isoform ZAKalpha. This is Mitogen-activated protein kinase kinase kinase 20 from Mus musculus (Mouse).